The sequence spans 231 residues: MKIAVIGAMEEEVTILRSKLEQTNREVIANCEFTSGFYEGKEVVLLKSGIGKVNAAMSTTILLDRFKPDVVINTGSAGGFHHSLNVGDIVISTEVRHHDVDVTAFDYEYGQVPNLPAAYKADNALIQAAEDEASELGHIQVVKGTIATGDSFMSDPDRVAFIRGKFEDLYAVEMEAAAVAQVSYQFNTPFVVIRALSDIAGKESEISFDQFLEQAAKHSTDLVLRMIKRIN.

Glu-12 acts as the Proton acceptor in catalysis. Residues Gly-78, Met-153, and 174-175 each bind substrate; that span reads ME. The active-site Proton donor is the Asp-198.

Belongs to the PNP/UDP phosphorylase family. MtnN subfamily.

The catalysed reaction is S-adenosyl-L-homocysteine + H2O = S-(5-deoxy-D-ribos-5-yl)-L-homocysteine + adenine. It carries out the reaction S-methyl-5'-thioadenosine + H2O = 5-(methylsulfanyl)-D-ribose + adenine. It catalyses the reaction 5'-deoxyadenosine + H2O = 5-deoxy-D-ribose + adenine. The protein operates within amino-acid biosynthesis; L-methionine biosynthesis via salvage pathway; S-methyl-5-thio-alpha-D-ribose 1-phosphate from S-methyl-5'-thioadenosine (hydrolase route): step 1/2. Functionally, catalyzes the irreversible cleavage of the glycosidic bond in both 5'-methylthioadenosine (MTA) and S-adenosylhomocysteine (SAH/AdoHcy) to adenine and the corresponding thioribose, 5'-methylthioribose and S-ribosylhomocysteine, respectively. Also cleaves 5'-deoxyadenosine, a toxic by-product of radical S-adenosylmethionine (SAM) enzymes, into 5-deoxyribose and adenine. The chain is 5'-methylthioadenosine/S-adenosylhomocysteine nucleosidase from Bacillus licheniformis (strain ATCC 14580 / DSM 13 / JCM 2505 / CCUG 7422 / NBRC 12200 / NCIMB 9375 / NCTC 10341 / NRRL NRS-1264 / Gibson 46).